A 114-amino-acid chain; its full sequence is UPF0342 protein OEOE_0901 (114 aa).

This sequence belongs to the UPF0342 family.

This is UPF0342 protein OEOE_0901 from Oenococcus oeni (strain ATCC BAA-331 / PSU-1).